Reading from the N-terminus, the 161-residue chain is Ribosome maturation factor RimP (161 aa).

Belongs to the RimP family.

The protein localises to the cytoplasm. Its function is as follows. Required for maturation of 30S ribosomal subunits. This chain is Ribosome maturation factor RimP, found in Pelobacter propionicus (strain DSM 2379 / NBRC 103807 / OttBd1).